Here is a 626-residue protein sequence, read N- to C-terminus: Chaperone protein HtpG (626 aa).

The segment at 1–339 (MSQNQETRGF…SNDLPLNVSR (339 aa)) is a; substrate-binding. A b region spans residues 340-555 (EILQDNKITA…NDQMTTQMAK (216 aa)). The c stretch occupies residues 556–626 (LFAAAGQPVP…FIKRINKLLG (71 aa)).

This sequence belongs to the heat shock protein 90 family. Homodimer.

The protein resides in the cytoplasm. In terms of biological role, molecular chaperone. Has ATPase activity. The sequence is that of Chaperone protein HtpG from Haemophilus influenzae (strain PittEE).